Reading from the N-terminus, the 340-residue chain is MYRKDLDHYLKQRLPKAVFLYGEFDFFIHYYIQTISALFKCDNPDIETSLFYASDYEKSQIATLLEQDSLFGGSSLVVLKLDFALHKKFKENDINLFLKALERPSHNRLIIGLYNAKSDTTKYKYTSDAIVKFFQKSPLKDEAICARFFIPKTWESLKFLQERANFLHLDISGHLLNALFEINNEDLGVSFNDLDKLAVLNAPITLEDIQELSSNAGDMDLQKLILGLFLKKSALDIYDYLLKEGKKDADILRGLERYFYQLFLFFAHIKTTGLMDAKEVLGYAPPKEIAENYAKNALRLKEAGYKRVFEIFRLWHIQSMQGQKELGFLYLTSIQKIINP.

In terms of assembly, seems to interact with H.pylori HolB.

Could be the functional equivalent of DNA polymerase III delta subunit (HolA). The polypeptide is Protein HP_1247 (Helicobacter pylori (strain ATCC 700392 / 26695) (Campylobacter pylori)).